Reading from the N-terminus, the 467-residue chain is Glutamate--tRNA ligase (467 aa).

Positions 9-19 (PSPTGFLHIGG) match the 'HIGH' region motif. The 'KMSKS' region signature appears at 250–254 (KLSKR). Position 253 (Lys253) interacts with ATP.

This sequence belongs to the class-I aminoacyl-tRNA synthetase family. Glutamate--tRNA ligase type 1 subfamily. As to quaternary structure, monomer.

It localises to the cytoplasm. The enzyme catalyses tRNA(Glu) + L-glutamate + ATP = L-glutamyl-tRNA(Glu) + AMP + diphosphate. In terms of biological role, catalyzes the attachment of glutamate to tRNA(Glu) in a two-step reaction: glutamate is first activated by ATP to form Glu-AMP and then transferred to the acceptor end of tRNA(Glu). This Mesomycoplasma hyopneumoniae (strain 232) (Mycoplasma hyopneumoniae) protein is Glutamate--tRNA ligase.